A 96-amino-acid chain; its full sequence is UPF0729 protein AGAP000931 (96 aa).

The interval valine 65–leucine 96 is disordered. Residues threonine 75 to leucine 96 show a composition bias toward low complexity.

The protein belongs to the UPF0729 family.

The chain is UPF0729 protein AGAP000931 from Anopheles gambiae (African malaria mosquito).